The chain runs to 624 residues: uncharacterized protein (624 aa).

A disordered region spans residues 113 to 249 (SINVRTSATT…RFHPVTDINK (137 aa)). Low complexity predominate over residues 118–225 (TSATTTESTN…ATTTESTNAS (108 aa)). Basic and acidic residues predominate over residues 226–249 (AKEDANKDGNAEDNRFHPVTDINK).

This is an uncharacterized protein from Saccharomyces cerevisiae (strain ATCC 204508 / S288c) (Baker's yeast).